Reading from the N-terminus, the 122-residue chain is Large ribosomal subunit protein uL14 (122 aa).

It belongs to the universal ribosomal protein uL14 family. As to quaternary structure, part of the 50S ribosomal subunit. Forms a cluster with proteins L3 and L19. In the 70S ribosome, L14 and L19 interact and together make contacts with the 16S rRNA in bridges B5 and B8.

Binds to 23S rRNA. Forms part of two intersubunit bridges in the 70S ribosome. In Allorhizobium ampelinum (strain ATCC BAA-846 / DSM 112012 / S4) (Agrobacterium vitis (strain S4)), this protein is Large ribosomal subunit protein uL14.